A 349-amino-acid chain; its full sequence is tRNA pseudouridine synthase D (349 aa).

Position 27 (Phe-27) interacts with substrate. Asp-80 (nucleophile) is an active-site residue. Asn-129 is a binding site for substrate. The 149-residue stretch at 155-303 (GVPNYFGAQR…VEAARRAMLL (149 aa)) folds into the TRUD domain. Phe-329 provides a ligand contact to substrate.

Belongs to the pseudouridine synthase TruD family.

The enzyme catalyses uridine(13) in tRNA = pseudouridine(13) in tRNA. In terms of biological role, responsible for synthesis of pseudouridine from uracil-13 in transfer RNAs. In Escherichia coli O7:K1 (strain IAI39 / ExPEC), this protein is tRNA pseudouridine synthase D.